Here is an 85-residue protein sequence, read N- to C-terminus: Large ribosomal subunit protein bL31B (85 aa).

This sequence belongs to the bacterial ribosomal protein bL31 family. Type B subfamily. Part of the 50S ribosomal subunit.

The polypeptide is Large ribosomal subunit protein bL31B (Clavibacter sepedonicus (Clavibacter michiganensis subsp. sepedonicus)).